Consider the following 344-residue polypeptide: MTLASTMPIIYSASDAAKWKVAVSPYLYQLSNLKLLFTGKLNFADFYYNTNPFVVGLLLSFILGNVLWGVSVWTKNTSQVDRLWPILPTAFSLHFLFYGLGYNIASRRLMIMAFLQTLWSARLTYNYYRKGGYNRGAEDYRWVRVRQIMPKWIYPLFHYFYIHIFQVLHLYLLASPTYIAMLAGNERAFGAWDWIALELFMFMFVLEMLADQQQWDYYEARNHYNVDKTVPPRFKYDLLSLGRGFNATGLFRWSRHPNFLAEQLIWLSFYLFGAIASESLLNWTIFAWLGLVGVFQGSTRLTEKMSCEKYPLYRVYQDKVGRFFPRLDGSHWDIVDDDASLKED.

A run of 5 helical transmembrane segments spans residues 53–73 (FVVGLLLSFILGNVLWGVSVW), 84–104 (WPILPTAFSLHFLFYGLGYNI), 153–173 (IYPLFHYFYIHIFQVLHLYLL), 189–209 (FGAWDWIALELFMFMFVLEML), and 275–295 (IASESLLNWTIFAWLGLVGVF).

It belongs to the steroid 5-alpha reductase family.

The protein resides in the endoplasmic reticulum membrane. This is an uncharacterized protein from Schizosaccharomyces pombe (strain 972 / ATCC 24843) (Fission yeast).